The primary structure comprises 1209 residues: Pre-mRNA-splicing factor rse1 (1209 aa).

The protein belongs to the RSE1 family. As to quaternary structure, associated with the spliceosome.

The protein localises to the nucleus. In terms of biological role, involved in pre-mRNA splicing and cell cycle control. This chain is Pre-mRNA-splicing factor rse1 (msp-5), found in Neurospora crassa (strain ATCC 24698 / 74-OR23-1A / CBS 708.71 / DSM 1257 / FGSC 987).